Here is a 548-residue protein sequence, read N- to C-terminus: T-complex protein 1 subunit theta (548 aa).

Positions 527–548 (QATGGPKPRGPKAQDEDDDGMA) are disordered.

This sequence belongs to the TCP-1 chaperonin family. In terms of assembly, heterooligomeric complex.

It localises to the cytoplasm. In terms of biological role, molecular chaperone; assists the folding of proteins upon ATP hydrolysis. Known to play a role, in vitro, in the folding of actin and tubulin. Required for correct subcellular localization of pgl-1. This is T-complex protein 1 subunit theta (cct-8) from Caenorhabditis elegans.